We begin with the raw amino-acid sequence, 250 residues long: Isoprenyl transferase (250 aa).

Asp26 is an active-site residue. Asp26 contributes to the Mg(2+) binding site. Substrate-binding positions include Gly27–Arg30, Trp31, Arg39, His43, and Ser71–Glu73. Asn74 serves as the catalytic Proton acceptor. Residues Trp75, Arg77, Arg198, and Arg204–Ser206 each bind substrate. Residue Glu217 participates in Mg(2+) binding.

This sequence belongs to the UPP synthase family. In terms of assembly, homodimer. The cofactor is Mg(2+).

Its function is as follows. Catalyzes the condensation of isopentenyl diphosphate (IPP) with allylic pyrophosphates generating different type of terpenoids. This Streptococcus agalactiae serotype III (strain NEM316) protein is Isoprenyl transferase.